Reading from the N-terminus, the 215-residue chain is Ribonuclease HII (215 aa).

The RNase H type-2 domain occupies 19 to 213 (QTVAGVDEVG…SLRQPSQQID (195 aa)). A divalent metal cation-binding residues include D25, E26, and D121.

The protein belongs to the RNase HII family. Mn(2+) serves as cofactor. Mg(2+) is required as a cofactor.

It localises to the cytoplasm. The enzyme catalyses Endonucleolytic cleavage to 5'-phosphomonoester.. Functionally, endonuclease that specifically degrades the RNA of RNA-DNA hybrids. This chain is Ribonuclease HII, found in Synechococcus elongatus (strain ATCC 33912 / PCC 7942 / FACHB-805) (Anacystis nidulans R2).